A 312-amino-acid chain; its full sequence is Speedy protein A (312 aa).

A speedy/Ringo box; Required for CDK-binding region spans residues 67 to 199; that stretch reads RQEMTAFFKL…SHYIWQRERS (133 aa). Position 221 is a phosphoserine (Ser-221). Position 223 is a phosphothreonine (Thr-223).

This sequence belongs to the Speedy/Ringo family. Interacts with CDK1. Interacts with CDK2. May interact with CDKN1B/KIP1. Identified in a complex with CDK2 and CDKN1B/KIP1, where it interacts primarily with CDK2.

It is found in the nucleus. In terms of biological role, regulates the G1/S phase transition of the cell cycle by binding and activating CDK1 and CDK2. Contributes to CDK2 activation without promoting CDK2 phosphorylation, by inducing a conformation change of the CDK2 T-loop that obstructs the substrate-binding cleft prior to kinase activation. Interferes with CDKN1B-mediated inhibition of CDK2. Mediates cell survival during the DNA damage process through activation of CDK2. The chain is Speedy protein A from Rattus norvegicus (Rat).